We begin with the raw amino-acid sequence, 318 residues long: WRKY transcription factor 28 (318 aa).

Polar residues-rich tracts occupy residues 74–84 and 106–115; these read SSEVFNSSIDQ and RVSPSNSSSS. Residues 74 to 158 form a disordered region; it reads SSEVFNSSID…KTEVKKQREP (85 aa). 2 stretches are compositionally biased toward basic and acidic residues: residues 116–126 and 148–158; these read EADHPGEDSGK and KKTEVKKQREP. The WRKY DNA-binding region spans 166-231; it reads SEVDHLEDGY…YEGQHNHPIP (66 aa).

Belongs to the WRKY group II-c family.

It localises to the nucleus. Transcription factor. Interacts specifically with the W box (5'-(T)TGAC[CT]-3'), a frequently occurring elicitor-responsive cis-acting element. The polypeptide is WRKY transcription factor 28 (WRKY28) (Arabidopsis thaliana (Mouse-ear cress)).